The sequence spans 431 residues: Serine hydroxymethyltransferase (431 aa).

Position 121–123 (A121–V123) interacts with (6S)-5,6,7,8-tetrahydrofolate. The residue at position 227 (K227) is an N6-(pyridoxal phosphate)lysine.

This sequence belongs to the SHMT family. In terms of assembly, homodimer. Pyridoxal 5'-phosphate is required as a cofactor.

It localises to the cytoplasm. It participates in amino-acid biosynthesis; glycine biosynthesis; glycine from L-serine: step 1/1. Catalyzes the reversible interconversion of serine and glycine with a modified folate serving as the one-carbon carrier. Also exhibits a pteridine-independent aldolase activity toward beta-hydroxyamino acids, producing glycine and aldehydes, via a retro-aldol mechanism. The polypeptide is Serine hydroxymethyltransferase (Metallosphaera sedula (strain ATCC 51363 / DSM 5348 / JCM 9185 / NBRC 15509 / TH2)).